A 430-amino-acid chain; its full sequence is UDP-glucuronate 4-epimerase 3 (430 aa).

2 consecutive transmembrane segments (helical) span residues 29-49 (SVAK…IFFY) and 90-110 (GFSV…SAAL). 92–123 (SVLVTGAAGFVGTHVSAALKRRGDGVLGLDNF) provides a ligand contact to NAD(+). The active-site Proton acceptor is Tyr242.

This sequence belongs to the NAD(P)-dependent epimerase/dehydratase family. As to quaternary structure, homodimer. As to expression, in roots, leaves, siliques, flowers, pollen and stems.

Its subcellular location is the golgi apparatus. The protein localises to the golgi stack membrane. It carries out the reaction UDP-alpha-D-glucuronate = UDP-alpha-D-galacturonate. Its function is as follows. Involved in the synthesis of the negatively charged monosaccharide that forms the backbone of pectic cell wall components. This chain is UDP-glucuronate 4-epimerase 3 (GAE3), found in Arabidopsis thaliana (Mouse-ear cress).